The chain runs to 400 residues: N(alpha)-acyl-glutamine aminoacylase (400 aa).

Belongs to the peptidase M20 family. The cofactor is Zn(2+).

The enzyme catalyses an N(2)-acyl-L-glutamine + H2O = a carboxylate + L-glutamine. It catalyses the reaction N(2)-[(2E)-3-methylhex-2-enoyl]-L-glutaminate + H2O = (2E)-3-methylhex-2-enoate + L-glutamine. It carries out the reaction N(2)-(3-hydroxy-3-methylhexanoyl)-L-glutaminate + H2O = 3-hydroxy-3-methylhexanoate + L-glutamine. Partial loss of activity with the combination Mn(2+) and chelating agents. Activity is lost in presence of 0.5 mM dithiothreitol. In terms of biological role, hydrolyzes odorless N-alpha-acyl-L-glutamine conjugates of short- and medium-chain fatty acids, releasing human axillary malodor compounds. The enzyme is highly specific for the glutamine residue but has a low specificity for the acyl part of the substrate. The two most common products are 3-methyl-2-hexenoic acid (3M2H) and 3-hydroxy-3-methyl-hexanoic acid (HMHA), which are produced from the odorless precursors N-alpha-3-methyl-2-hexenoyl-L-glutamine (3M2H-Gln) and N-alpha-3-hydroxy-3-methylhexanoyl-L-glutamine (HMHA-Gln). In addition, over 28 different carboxylic acids contributing to human body odor are released by this enzyme from odorless axilla secretions, including several aliphatic 3-hydroxy acids with 4-Me branches, 3,4-unsaturated, 4-Et-branched aliphatic acids, and a variety of degradation products of amino acids. In Corynebacterium striatum, this protein is N(alpha)-acyl-glutamine aminoacylase.